The chain runs to 874 residues: Alanine--tRNA ligase (874 aa).

Residues H563, H567, C665, and H669 each coordinate Zn(2+).

This sequence belongs to the class-II aminoacyl-tRNA synthetase family. Requires Zn(2+) as cofactor.

The protein localises to the cytoplasm. The catalysed reaction is tRNA(Ala) + L-alanine + ATP = L-alanyl-tRNA(Ala) + AMP + diphosphate. In terms of biological role, catalyzes the attachment of alanine to tRNA(Ala) in a two-step reaction: alanine is first activated by ATP to form Ala-AMP and then transferred to the acceptor end of tRNA(Ala). Also edits incorrectly charged Ser-tRNA(Ala) and Gly-tRNA(Ala) via its editing domain. The protein is Alanine--tRNA ligase of Actinobacillus pleuropneumoniae serotype 7 (strain AP76).